Reading from the N-terminus, the 262-residue chain is Hydroxyethylthiazole kinase (262 aa).

M50 is a substrate binding site. Positions 125 and 171 each coordinate ATP. Position 198 (G198) interacts with substrate.

The protein belongs to the Thz kinase family. The cofactor is Mg(2+).

The catalysed reaction is 5-(2-hydroxyethyl)-4-methylthiazole + ATP = 4-methyl-5-(2-phosphooxyethyl)-thiazole + ADP + H(+). The protein operates within cofactor biosynthesis; thiamine diphosphate biosynthesis; 4-methyl-5-(2-phosphoethyl)-thiazole from 5-(2-hydroxyethyl)-4-methylthiazole: step 1/1. In terms of biological role, catalyzes the phosphorylation of the hydroxyl group of 4-methyl-5-beta-hydroxyethylthiazole (THZ). The protein is Hydroxyethylthiazole kinase of Citrobacter koseri (strain ATCC BAA-895 / CDC 4225-83 / SGSC4696).